Here is a 364-residue protein sequence, read N- to C-terminus: Mitogen-activated protein kinase 11 (364 aa).

Residues L24–F308 enclose the Protein kinase domain. Residues V30 to V38 and K53 each bind ATP. E71 is a nilotinib binding site. Residue D150 is the Proton acceptor of the active site. T180 bears the Phosphothreonine; by MAP2K3, MAP2K4 and MAP2K6 mark. A TXY motif is present at residues T180–Y182. At Y182 the chain carries Phosphotyrosine; by MAP2K3, MAP2K4 and MAP2K6. Disordered regions lie at residues Y311–E331 and Q343–Q364. Residues P314–S326 show a composition bias toward acidic residues. Y323 bears the Phosphotyrosine; by ZAP70 mark.

Belongs to the protein kinase superfamily. CMGC Ser/Thr protein kinase family. MAP kinase subfamily. As to quaternary structure, interacts with HDAC3 and DUSP16. Mg(2+) serves as cofactor. Post-translationally, dually phosphorylated on Thr-180 and Tyr-182 by MAP2K3/MKK3, MAP2K4/MKK4 and MAP2K6/MKK6, which activates the enzyme. As to expression, highest levels in the brain and heart. Also expressed in the placenta, lung, liver, skeletal muscle, kidney and pancreas.

It is found in the cytoplasm. The protein localises to the nucleus. It carries out the reaction L-seryl-[protein] + ATP = O-phospho-L-seryl-[protein] + ADP + H(+). The catalysed reaction is L-threonyl-[protein] + ATP = O-phospho-L-threonyl-[protein] + ADP + H(+). Activated by phosphorylation on threonine and tyrosine by MAP2K3/MKK3, MAP2K4/MKK4 and MAP2K6/MKK6. MAP2K3/MKK3 and MAP2K6/MKK6 are both essential for the activation of MAPK11 induced by environmental stress. HDAC3 interacts directly and selectively with MAPK11 to repress ATF2 transcriptional activity, and regulate TNF gene expression in LPS-stimulated cells. Inhibited by SB203580 and pyridinyl-imidazole related compounds. Functionally, serine/threonine kinase which acts as an essential component of the MAP kinase signal transduction pathway. MAPK11 is one of the four p38 MAPKs which play an important role in the cascades of cellular responses evoked by extracellular stimuli such as pro-inflammatory cytokines or physical stress leading to direct activation of transcription factors. Accordingly, p38 MAPKs phosphorylate a broad range of proteins and it has been estimated that they may have approximately 200 to 300 substrates each. MAPK11 functions are mostly redundant with those of MAPK14. Some of the targets are downstream kinases which are activated through phosphorylation and further phosphorylate additional targets. RPS6KA5/MSK1 and RPS6KA4/MSK2 can directly phosphorylate and activate transcription factors such as CREB1, ATF1, the NF-kappa-B isoform RELA/NFKB3, STAT1 and STAT3, but can also phosphorylate histone H3 and the nucleosomal protein HMGN1. RPS6KA5/MSK1 and RPS6KA4/MSK2 play important roles in the rapid induction of immediate-early genes in response to stress or mitogenic stimuli, either by inducing chromatin remodeling or by recruiting the transcription machinery. On the other hand, two other kinase targets, MAPKAPK2/MK2 and MAPKAPK3/MK3, participate in the control of gene expression mostly at the post-transcriptional level, by phosphorylating ZFP36 (tristetraprolin) and ELAVL1, and by regulating EEF2K, which is important for the elongation of mRNA during translation. MKNK1/MNK1 and MKNK2/MNK2, two other kinases activated by p38 MAPKs, regulate protein synthesis by phosphorylating the initiation factor EIF4E2. In the cytoplasm, the p38 MAPK pathway is an important regulator of protein turnover. For example, CFLAR is an inhibitor of TNF-induced apoptosis whose proteasome-mediated degradation is regulated by p38 MAPK phosphorylation. Ectodomain shedding of transmembrane proteins is regulated by p38 MAPKs as well. In response to inflammatory stimuli, p38 MAPKs phosphorylate the membrane-associated metalloprotease ADAM17. Such phosphorylation is required for ADAM17-mediated ectodomain shedding of TGF-alpha family ligands, which results in the activation of EGFR signaling and cell proliferation. Additional examples of p38 MAPK substrates are the FGFR1. FGFR1 can be translocated from the extracellular space into the cytosol and nucleus of target cells, and regulates processes such as rRNA synthesis and cell growth. FGFR1 translocation requires p38 MAPK activation. In the nucleus, many transcription factors are phosphorylated and activated by p38 MAPKs in response to different stimuli. Classical examples include ATF1, ATF2, ATF6, ELK1, PTPRH, DDIT3, TP53/p53 and MEF2C and MEF2A. The p38 MAPKs are emerging as important modulators of gene expression by regulating chromatin modifiers and remodelers. The promoters of several genes involved in the inflammatory response, such as IL6, IL8 and IL12B, display a p38 MAPK-dependent enrichment of histone H3 phosphorylation on 'Ser-10' (H3S10ph) in LPS-stimulated myeloid cells. This phosphorylation enhances the accessibility of the cryptic NF-kappa-B-binding sites marking promoters for increased NF-kappa-B recruitment. Phosphorylates NLRP1 downstream of MAP3K20/ZAK in response to UV-B irradiation and ribosome collisions, promoting activation of the NLRP1 inflammasome and pyroptosis. Phosphorylates methyltransferase DOT1L on 'Ser-834', 'Thr-900', 'Ser-902', 'Thr-984', 'Ser-1001', 'Ser-1009' and 'Ser-1104'. This is Mitogen-activated protein kinase 11 (MAPK11) from Homo sapiens (Human).